Here is a 500-residue protein sequence, read N- to C-terminus: Chromosomal replication initiator protein DnaA (500 aa).

A domain I, interacts with DnaA modulators region spans residues 1 to 81 (MVNASGDPVI…LQALRTVTGE (81 aa)). Residues 81 to 155 (ENMFPAFKVV…QQKMNRDPET (75 aa)) are domain II. A domain III, AAA+ region region spans residues 156 to 377 (HLNKNFTFDS…GALTRVTAVA (222 aa)). ATP contacts are provided by Gly-200, Gly-202, Lys-203, and Thr-204. Residues 378–500 (SLSNQPVTRA…TVRLKQSNTN (123 aa)) are domain IV, binds dsDNA.

The protein belongs to the DnaA family. As to quaternary structure, oligomerizes as a right-handed, spiral filament on DNA at oriC.

It is found in the cytoplasm. In terms of biological role, plays an essential role in the initiation and regulation of chromosomal replication. ATP-DnaA binds to the origin of replication (oriC) to initiate formation of the DNA replication initiation complex once per cell cycle. Binds the DnaA box (a 9 base pair repeat at the origin) and separates the double-stranded (ds)DNA. Forms a right-handed helical filament on oriC DNA; dsDNA binds to the exterior of the filament while single-stranded (ss)DNA is stabiized in the filament's interior. The ATP-DnaA-oriC complex binds and stabilizes one strand of the AT-rich DNA unwinding element (DUE), permitting loading of DNA polymerase. After initiation quickly degrades to an ADP-DnaA complex that is not apt for DNA replication. Binds acidic phospholipids. The sequence is that of Chromosomal replication initiator protein DnaA from Bifidobacterium longum (strain DJO10A).